The chain runs to 333 residues: Casein kinase II subunit alpha-2 (333 aa).

One can recognise a Protein kinase domain in the interval 34-319 (YEVVRKVGRG…AREAMAHPYF (286 aa)). Residues 40–48 (VGRGKYSEV) and lysine 63 each bind ATP. Aspartate 151 functions as the Proton acceptor in the catalytic mechanism.

This sequence belongs to the protein kinase superfamily. Ser/Thr protein kinase family. CK2 subfamily. In terms of assembly, monomer. In terms of processing, autophosphorylated.

Its subcellular location is the cytoplasm. It carries out the reaction L-seryl-[protein] + ATP = O-phospho-L-seryl-[protein] + ADP + H(+). The catalysed reaction is L-threonyl-[protein] + ATP = O-phospho-L-threonyl-[protein] + ADP + H(+). Its function is as follows. Casein kinases are operationally defined by their preferential utilization of acidic proteins such as caseins as substrates. It can phosphorylate a large number of proteins. Involved in photoperiod sensitivity (PS). Increases days-to-heading under natural day (ND) and long day (LD) conditions, but not under short day (SD) conditions. The sequence is that of Casein kinase II subunit alpha-2 from Oryza sativa subsp. indica (Rice).